We begin with the raw amino-acid sequence, 434 residues long: Exopolygalacturonase X-1 (434 aa).

The first 22 residues, 1–22 (MKLSHLLTSAVSVLSLGLTVEG), serve as a signal peptide directing secretion. N-linked (GlcNAc...) asparagine glycosylation is found at Asn-113, Asn-129, and Asn-199. The PbH1 1 repeat unit spans residues 231–252 (SKNIVIQNSVINNGDDCVSFKP). Asp-245 serves as the catalytic Proton donor. A disulfide bond links Cys-247 and Cys-264. Residues Asn-253 and Asn-265 are each glycosylated (N-linked (GlcNAc...) asparagine). Residues 254–274 (STEILVQNLYCNGSHGISVGS) form a PbH1 2 repeat. The active site involves His-268. N-linked (GlcNAc...) asparagine glycosylation is found at Asn-292, Asn-297, Asn-329, Asn-354, and Asn-364. The PbH1 3 repeat unit spans residues 327–348 (VSNITYEDMYIENVDWAIEITQ). A PbH1 4 repeat occupies 362–405 (PSNLTISDVYISNMYGTTSSARDPNIGTIVCSSPDVCSNIYVEN). Cys-392 and Cys-398 are oxidised to a cystine. 2 N-linked (GlcNAc...) asparagine glycosylation sites follow: Asn-423 and Asn-430.

The protein belongs to the glycosyl hydrolase 28 family.

It is found in the secreted. It carries out the reaction [(1-&gt;4)-alpha-D-galacturonosyl](n) + H2O = alpha-D-galacturonate + [(1-&gt;4)-alpha-D-galacturonosyl](n-1). Specific in hydrolyzing the terminal glycosidic bond of polygalacturonic acid and oligogalacturonates. The protein is Exopolygalacturonase X-1 (pgaX-1) of Emericella nidulans (strain FGSC A4 / ATCC 38163 / CBS 112.46 / NRRL 194 / M139) (Aspergillus nidulans).